Reading from the N-terminus, the 295-residue chain is Light-independent protochlorophyllide reductase iron-sulfur ATP-binding protein (295 aa).

ATP-binding positions include 10 to 15 (GIGKST) and lysine 39. Serine 14 is a binding site for Mg(2+). [4Fe-4S] cluster-binding residues include cysteine 95 and cysteine 129. 180–181 (NR) serves as a coordination point for ATP. A compositionally biased stretch (basic and acidic residues) spans 275–289 (TKDKKENKKEDKENS). The interval 275 to 295 (TKDKKENKKEDKENSADFTWL) is disordered.

This sequence belongs to the NifH/BchL/ChlL family. As to quaternary structure, homodimer. Protochlorophyllide reductase is composed of three subunits; ChlL, ChlN and ChlB. Requires [4Fe-4S] cluster as cofactor.

The protein resides in the plastid. Its subcellular location is the chloroplast. The catalysed reaction is chlorophyllide a + oxidized 2[4Fe-4S]-[ferredoxin] + 2 ADP + 2 phosphate = protochlorophyllide a + reduced 2[4Fe-4S]-[ferredoxin] + 2 ATP + 2 H2O. It functions in the pathway porphyrin-containing compound metabolism; chlorophyll biosynthesis (light-independent). In terms of biological role, component of the dark-operative protochlorophyllide reductase (DPOR) that uses Mg-ATP and reduced ferredoxin to reduce ring D of protochlorophyllide (Pchlide) to form chlorophyllide a (Chlide). This reaction is light-independent. The L component serves as a unique electron donor to the NB-component of the complex, and binds Mg-ATP. This Physcomitrium patens (Spreading-leaved earth moss) protein is Light-independent protochlorophyllide reductase iron-sulfur ATP-binding protein.